Reading from the N-terminus, the 1742-residue chain is NACHT and WD repeat domain-containing protein 2 (1742 aa).

LRR repeat units lie at residues 386-410 (FYEY…GHIN), 677-698 (LEDV…TRPS), 724-747 (VKNV…LYLQ), 883-906 (YSQE…VTAF), and 925-953 (LPKL…SSMD). An NACHT domain is found at 410 to 737 (NPLIIYGGPC…TLLVWANRHL (328 aa)). WD repeat units follow at residues 963-1004 (LSSS…LLRQ), 1007-1046 (TAQS…LLSE), 1140-1179 (FSGG…SPQL), 1229-1271 (KHNE…ASLQ), 1272-1311 (EISG…AMSN), 1314-1353 (KTGK…IEAV), 1355-1394 (KHEG…NLFR), 1396-1434 (NGQR…RVCN), 1476-1516 (EDGT…ICRR), 1522-1564 (NFLK…VHAS), and 1614-1653 (SLYK…DAAL).

In Homo sapiens (Human), this protein is NACHT and WD repeat domain-containing protein 2 (NWD2).